We begin with the raw amino-acid sequence, 536 residues long: GMP synthase [glutamine-hydrolyzing] (536 aa).

One can recognise a Glutamine amidotransferase type-1 domain in the interval 19–212; the sequence is RILILDFGSQ…VHEICDCAGS (194 aa). Cysteine 96 serves as the catalytic Nucleophile. Residues histidine 186 and glutamate 188 contribute to the active site. The GMPS ATP-PPase domain maps to 213-411; it reads WTPDNIIDMR…LGLPAKMINR (199 aa). Residue 240–246 coordinates ATP; it reads SGGVDSS.

As to quaternary structure, homodimer.

It carries out the reaction XMP + L-glutamine + ATP + H2O = GMP + L-glutamate + AMP + diphosphate + 2 H(+). The protein operates within purine metabolism; GMP biosynthesis; GMP from XMP (L-Gln route): step 1/1. In terms of biological role, catalyzes the synthesis of GMP from XMP. The sequence is that of GMP synthase [glutamine-hydrolyzing] from Psychrobacter arcticus (strain DSM 17307 / VKM B-2377 / 273-4).